Consider the following 827-residue polypeptide: MNLSRRDFMKANAAMAAATAAGLTIPVKNVVAAESEIKWDKGVCRFCGTGCAVLVGTKDGRVVASQGDPDAEVNRGLNCIKGYFLPKIMYGKDRLTQPLLRMTNGKFDKNGDFAPVSWDFAFKTMAEKFKEAFKKNGQNAVGMFSSGQSTIWEGYAKNKLWKAGFRSNNVDPNARHCMASAAVAFMRTFGMDEPMGCYDDIEQADAFVLWGSNMAEMHPILWSRITDRRISNPDVRVTVLSTYEHRSFELADHGLIFTPQTDLAIMNYIINYLIQNNAINWDFVNKHTKFKRGETNIGYGLRPEHPLEKDTNRKTAGKMHDSSFEELKQLVSEYTVEKVSQMSGLDKVQLETLAKLYADPTKKVVSYWTMGFNQHTRGVWVNQLIYNIHLLTGKISIPGCGPFSLTGQPSACGTAREVGSFPHRLPADLVVTNPKHREIAERIWKLPKGTVSEKVGLHTIAQDRAMNDGKMNVLWQMCNNNMQAGPNINQERLPGWRKEGNFVIVSDPYPTVSALSADLILPTAMWVEKEGAYGNAERRTQFWRQQVKAPGEAKSDLWQLMEFAKYFTTDEMWTEELLAQMPEYRGKTLYEVLFKNGQVDKFPLSELAEGQLNDESEYFGYYVHKGLFEEYAEFGRGHGHDLAPFDMYHKARGLRWPVVEGKETLWRYREGYDPYVKEGEGVAFYGYPDKKAIILAVPYEPPAESPDNEYDLWLSTGRVLEHWHTGTMTRRVPELHRAFPNNLVWMHPLDAQARGLRHGDKIKISSRRGEMISYLDTRGRNKPPRGLVFTTFFDAGQLANNLTLDATDPISKETDFKKCAVKVEKAA.

The segment at residues 1-33 is a signal peptide (tat-type signal); it reads MNLSRRDFMKANAAMAAATAAGLTIPVKNVVAA. Residues 37–93 form the 4Fe-4S Mo/W bis-MGD-type domain; sequence IKWDKGVCRFCGTGCAVLVGTKDGRVVASQGDPDAEVNRGLNCIKGYFLPKIMYGKD. Cys44, Cys47, Cys51, and Cys79 together coordinate [4Fe-4S] cluster. Mo-bis(molybdopterin guanine dinucleotide)-binding positions include Lys81, Gln148, Asn173, Cys177, 210–217, 241–245, 260–262, Met370, Gln374, Asn480, 506–507, Lys529, Asp556, and 716–725; these read WGSNMAEM, STYEH, QTD, SD, and TGRVLEHWHT. Position 792 (Phe792) interacts with substrate. 2 residues coordinate Mo-bis(molybdopterin guanine dinucleotide): Asn800 and Lys817.

The protein belongs to the prokaryotic molybdopterin-containing oxidoreductase family. NasA/NapA/NarB subfamily. In terms of assembly, component of the periplasmic nitrate reductase NapAB complex composed of NapA and NapB. It depends on [4Fe-4S] cluster as a cofactor. Requires Mo-bis(molybdopterin guanine dinucleotide) as cofactor. In terms of processing, predicted to be exported by the Tat system. The position of the signal peptide cleavage has not been experimentally proven.

It localises to the periplasm. It carries out the reaction 2 Fe(II)-[cytochrome] + nitrate + 2 H(+) = 2 Fe(III)-[cytochrome] + nitrite + H2O. Catalytic subunit of the periplasmic nitrate reductase complex NapAB. Receives electrons from NapB and catalyzes the reduction of nitrate to nitrite. The polypeptide is Periplasmic nitrate reductase (Haemophilus influenzae (strain PittEE)).